The following is a 370-amino-acid chain: 3-dehydroquinate synthase (370 aa).

Residues 112 to 116, 136 to 137, Lys149, Lys158, and 176 to 179 contribute to the NAD(+) site; these read GVIGD, TT, and TLAT. Residues Glu191, His254, and His276 each coordinate Zn(2+).

It belongs to the sugar phosphate cyclases superfamily. Dehydroquinate synthase family. The cofactor is Co(2+). Requires Zn(2+) as cofactor. NAD(+) serves as cofactor.

It is found in the cytoplasm. The enzyme catalyses 7-phospho-2-dehydro-3-deoxy-D-arabino-heptonate = 3-dehydroquinate + phosphate. It functions in the pathway metabolic intermediate biosynthesis; chorismate biosynthesis; chorismate from D-erythrose 4-phosphate and phosphoenolpyruvate: step 2/7. Functionally, catalyzes the conversion of 3-deoxy-D-arabino-heptulosonate 7-phosphate (DAHP) to dehydroquinate (DHQ). The chain is 3-dehydroquinate synthase from Xylella fastidiosa (strain M12).